The primary structure comprises 126 residues: 13 kDa ribonucleoprotein-associated protein (126 aa).

The protein belongs to the eukaryotic ribosomal protein eL8 family. In terms of assembly, component of the U3 snoRNP particle. Binds to the C'/D and B/C motifs in U3 snoRNA. Component of the 25S U4/U6.U5 tri-snRNP particle, a subcomplex of the spliceosome. Binds to the 5' stem-loop of U4 snRNA.

Its subcellular location is the nucleus. It localises to the nucleolus. Its function is as follows. Common component of the spliceosome and rRNA processing machinery. In association with the spliceosomal U4/U6.U5 tri-snRNP particle, required for splicing of pre-mRNA. In association with box C/D snoRNPs, required for processing of pre-ribosomal RNA (rRNA) and site-specific 2'-O-methylation of substrate RNAs. Essential for the accumulation and stability of U4 snRNA, U6 snRNA, and box C/D snoRNAs. In Kluyveromyces lactis (strain ATCC 8585 / CBS 2359 / DSM 70799 / NBRC 1267 / NRRL Y-1140 / WM37) (Yeast), this protein is 13 kDa ribonucleoprotein-associated protein (SNU13).